The primary structure comprises 467 residues: NALCN channel auxiliary factor 1 (467 aa).

A helical transmembrane segment spans residues 40–60 (LSLASLLFFTVLLSDHLWFCA). Positions 121 to 161 (MGESSPAAQAHRLLSASSSPTLPPSPGGGGGSKGNRGKNNR) are disordered. Asparagine 160, asparagine 226, and asparagine 254 each carry an N-linked (GlcNAc...) asparagine glycan. Disulfide bonds link cysteine 200–cysteine 270, cysteine 235–cysteine 322, cysteine 255–cysteine 270, cysteine 313–cysteine 350, cysteine 333–cysteine 386, cysteine 339–cysteine 385, and cysteine 343–cysteine 370. The span at 390-408 (SEEQTAPRPKGTVDRRDSC) shows a compositional bias: basic and acidic residues. Positions 390–409 (SEEQTAPRPKGTVDRRDSCP) are disordered. Residues 426-446 (LKLCVLVLILLHTVLTASAAQ) form a helical membrane-spanning segment. Asparagine 462 carries an N-linked (GlcNAc...) asparagine glycan.

Belongs to the NALF family. As to quaternary structure, component of the NALCN channel complex. NALCN complex consists of NALCN and auxiliary subunits, UNC79, UNC80 and NACL1. These auxiliary subunits are essential for the NALCN channel function.

Its subcellular location is the cell membrane. Auxillary component of the NALCN sodium channel complex, a channel that regulates the resting membrane potential and controls neuronal excitability. This is NALCN channel auxiliary factor 1 from Mus musculus (Mouse).